The following is a 146-amino-acid chain: D-aminoacyl-tRNA deacylase (146 aa).

The Gly-cisPro motif, important for rejection of L-amino acids motif lies at 137–138 (GP).

It belongs to the DTD family. As to quaternary structure, homodimer.

The protein resides in the cytoplasm. The catalysed reaction is glycyl-tRNA(Ala) + H2O = tRNA(Ala) + glycine + H(+). It carries out the reaction a D-aminoacyl-tRNA + H2O = a tRNA + a D-alpha-amino acid + H(+). Its function is as follows. An aminoacyl-tRNA editing enzyme that deacylates mischarged D-aminoacyl-tRNAs. Also deacylates mischarged glycyl-tRNA(Ala), protecting cells against glycine mischarging by AlaRS. Acts via tRNA-based rather than protein-based catalysis; rejects L-amino acids rather than detecting D-amino acids in the active site. By recycling D-aminoacyl-tRNA to D-amino acids and free tRNA molecules, this enzyme counteracts the toxicity associated with the formation of D-aminoacyl-tRNA entities in vivo and helps enforce protein L-homochirality. This Bacillus cereus (strain G9842) protein is D-aminoacyl-tRNA deacylase.